We begin with the raw amino-acid sequence, 356 residues long: DNA polymerase IV (356 aa).

The 182-residue stretch at 6 to 187 (IIHIDMDYFF…LDIGDFPGVG (182 aa)) folds into the UmuC domain. Mg(2+) is bound by residues aspartate 10 and aspartate 105. Glutamate 106 is a catalytic residue.

This sequence belongs to the DNA polymerase type-Y family. As to quaternary structure, monomer. The cofactor is Mg(2+).

Its subcellular location is the cytoplasm. It carries out the reaction DNA(n) + a 2'-deoxyribonucleoside 5'-triphosphate = DNA(n+1) + diphosphate. Poorly processive, error-prone DNA polymerase involved in untargeted mutagenesis. Copies undamaged DNA at stalled replication forks, which arise in vivo from mismatched or misaligned primer ends. These misaligned primers can be extended by PolIV. Exhibits no 3'-5' exonuclease (proofreading) activity. May be involved in translesional synthesis, in conjunction with the beta clamp from PolIII. The polypeptide is DNA polymerase IV (Staphylococcus aureus (strain MRSA252)).